Here is a 185-residue protein sequence, read N- to C-terminus: Kappa-casein (185 aa).

The N-terminal stretch at 1-20 is a signal peptide; the sequence is MKSFFLVVNILALTLPFLGA. O-linked (GalNAc...) threonine glycosylation occurs at T143. A Phosphoserine; alternate modification is found at S161. O-linked (GalNAc...) serine; alternate glycosylation occurs at S161. T178 carries O-linked (GalNAc...) threonine glycosylation. At S179 the chain carries Phosphoserine.

This sequence belongs to the kappa-casein family. In terms of tissue distribution, mammary gland specific. Secreted in milk.

It is found in the secreted. Functionally, kappa-casein stabilizes micelle formation, preventing casein precipitation in milk. This chain is Kappa-casein (CSN3), found in Equus caballus (Horse).